A 26-amino-acid chain; its full sequence is Conotoxin Eb6.15 (26 aa).

2 cysteine pairs are disulfide-bonded: cysteine 7–cysteine 18 and cysteine 13–cysteine 25.

It belongs to the conotoxin O1 superfamily. Expressed by the venom duct.

Its subcellular location is the secreted. The sequence is that of Conotoxin Eb6.15 (E1) from Conus ebraeus (Hebrew cone).